The primary structure comprises 431 residues: Tyrosine--tRNA ligase (431 aa).

L-tyrosine is bound at residue Tyr34. The 'HIGH' region motif lies at 39-48; the sequence is PTADSLHIGH. L-tyrosine is bound by residues Tyr171 and Gln175. Positions 231-235 match the 'KMSKS' region motif; that stretch reads KFGKT. Lys234 contributes to the ATP binding site. Residues 353–422 enclose the S4 RNA-binding domain; sequence INAVEALVKT…GKYTILRRGK (70 aa).

Belongs to the class-I aminoacyl-tRNA synthetase family. TyrS type 1 subfamily. Homodimer.

It is found in the cytoplasm. It carries out the reaction tRNA(Tyr) + L-tyrosine + ATP = L-tyrosyl-tRNA(Tyr) + AMP + diphosphate + H(+). Its function is as follows. Catalyzes the attachment of tyrosine to tRNA(Tyr) in a two-step reaction: tyrosine is first activated by ATP to form Tyr-AMP and then transferred to the acceptor end of tRNA(Tyr). The sequence is that of Tyrosine--tRNA ligase from Neisseria gonorrhoeae (strain ATCC 700825 / FA 1090).